A 108-amino-acid chain; its full sequence is Abscisic stress-ripening protein 3 (108 aa).

2 disordered regions span residues 1–34 and 84–108; these read MAEE…HHSH and FAFH…GRHH. Residues 15 to 24 are compositionally biased toward basic and acidic residues; that stretch reads NREEEGGPVD. The span at 25–34 shows a compositional bias: basic residues; it reads HKKKVKHHSH. Over residues 95–108 the composition is skewed to basic and acidic residues; that stretch reads AKKEKKAAEKGRHH.

Belongs to the abscisic acid and water stress-induced protein family.

This chain is Abscisic stress-ripening protein 3, found in Solanum lycopersicum (Tomato).